The following is a 324-amino-acid chain: tRNA N6-adenosine threonylcarbamoyltransferase (324 aa).

3 residues coordinate Fe cation: His-107, His-111, and Tyr-127. Substrate-binding positions include 127–131 (YVSGG), Asp-159, Gly-172, Glu-176, and Asn-257. Asp-285 lines the Fe cation pocket.

The protein belongs to the KAE1 / TsaD family. In terms of assembly, monomer. Component of the KEOPS complex that consists of Kae1, Bud32, Cgi121 and Pcc1; the whole complex dimerizes. It depends on Fe(2+) as a cofactor.

The protein localises to the cytoplasm. It catalyses the reaction L-threonylcarbamoyladenylate + adenosine(37) in tRNA = N(6)-L-threonylcarbamoyladenosine(37) in tRNA + AMP + H(+). In terms of biological role, required for the formation of a threonylcarbamoyl group on adenosine at position 37 (t(6)A37) in tRNAs that read codons beginning with adenine. Is a component of the KEOPS complex that is probably involved in the transfer of the threonylcarbamoyl moiety of threonylcarbamoyl-AMP (TC-AMP) to the N6 group of A37. Kae1 likely plays a direct catalytic role in this reaction, but requires other protein(s) of the complex to fulfill this activity. The sequence is that of tRNA N6-adenosine threonylcarbamoyltransferase from Thermococcus sibiricus (strain DSM 12597 / MM 739).